The chain runs to 205 residues: uncharacterized protein (205 aa).

Positions 10–75 form a coiled coil; it reads QDLLSAVDQQ…AANLMTVMTD (66 aa). Residues 111-138 are disordered; sequence PLSNTNNEQTSPPASGKTSETPKKNPTN. The segment covering 112-138 has biased composition (polar residues); it reads LSNTNNEQTSPPASGKTSETPKKNPTN.

Belongs to the asfivirus K205R family.

The protein resides in the host cytoplasm. Induces host endoplasmic reticulum stress and consequently activates autophagy and NF-kappa-B signaling pathway. In turn, may induce autophagy-mediated STING1 degradation and innate immune evasion. This is an uncharacterized protein from Ornithodoros (relapsing fever ticks).